A 64-amino-acid chain; its full sequence is MAKIRQKTKRAVAKRFSITKNGKLKRKHAYRSHLALGRSTKAKRHLRKDAIMSTSDTKRYTQCL.

It belongs to the bacterial ribosomal protein bL35 family.

In Ureaplasma parvum serovar 3 (strain ATCC 27815 / 27 / NCTC 11736), this protein is Large ribosomal subunit protein bL35.